Consider the following 381-residue polypeptide: cAMP-dependent protein kinase type I-alpha regulatory subunit (381 aa).

Met-1 is subject to N-acetylmethionine. Residues 1–135 (MESGSTAASE…AALAKAIEKN (135 aa)) form a dimerization and phosphorylation region. A Phosphoserine modification is found at Ser-3. The interval 64–96 (QIQNLQKAGTRTDSREDEISPPPPNPVVKGRRR) is disordered. Phosphothreonine is present on Thr-75. Residues Ser-77 and Ser-83 each carry the phosphoserine modification. Residues 96–100 (RRGAI) carry the Pseudophosphorylation motif motif. Ser-101 bears the Phosphoserine mark. Residues 137–254 (LFSH…SKVS), Glu-202, Arg-211, 255–381 (ILES…SLSV), Glu-326, and Arg-335 contribute to the 3',5'-cyclic AMP site. Ser-258 bears the Phosphoserine mark.

It belongs to the cAMP-dependent kinase regulatory chain family. In terms of assembly, the inactive holoenzyme is composed of two regulatory chains and two catalytic chains. Activation by cAMP releases the two active catalytic monomers and the regulatory dimer. Interacts with PRKACA and PRKACB. PRKAR1A also interacts with RFC2; the complex may be involved in cell survival. Interacts with AKAP4. Interacts with RARA; the interaction occurs in the presence of cAMP or FSH and regulates RARA transcriptional activity. Interacts with the phosphorylated form of PJA2. Interacts with CBFA2T3. Interacts with PRKX; regulates this cAMP-dependent protein kinase. Interacts with smAKAP; this interaction may target PRKAR1A to the plasma membrane. Interacts with AICDA. The pseudophosphorylation site binds to the substrate-binding region of the catalytic chain, resulting in the inhibition of its activity.

The protein localises to the cell membrane. In terms of biological role, regulatory subunit of the cAMP-dependent protein kinases involved in cAMP signaling in cells. In Pongo abelii (Sumatran orangutan), this protein is cAMP-dependent protein kinase type I-alpha regulatory subunit (PRKAR1A).